We begin with the raw amino-acid sequence, 644 residues long: Exoribonuclease 2 (644 aa).

Positions 189–516 constitute an RNB domain; sequence RQDLTALNFV…NHRLLKAAIK (328 aa). An S1 motif domain is found at 561-643; it reads DTRFAAEIID…ETRSIIARPV (83 aa).

It belongs to the RNR ribonuclease family. RNase II subfamily.

The protein localises to the cytoplasm. It carries out the reaction Exonucleolytic cleavage in the 3'- to 5'-direction to yield nucleoside 5'-phosphates.. Its function is as follows. Involved in mRNA degradation. Hydrolyzes single-stranded polyribonucleotides processively in the 3' to 5' direction. The polypeptide is Exoribonuclease 2 (Escherichia fergusonii (strain ATCC 35469 / DSM 13698 / CCUG 18766 / IAM 14443 / JCM 21226 / LMG 7866 / NBRC 102419 / NCTC 12128 / CDC 0568-73)).